Here is a 222-residue protein sequence, read N- to C-terminus: LHFPL tetraspan subfamily member 3 protein (222 aa).

4 helical membrane-spanning segments follow: residues 22 to 42 (IGVL…VCFI), 96 to 116 (FFIG…TLFF), 126 to 146 (ICAW…MIFP), and 177 to 197 (ILAI…VVLG).

The protein belongs to the LHFP family. As to expression, brain-specific.

It localises to the membrane. The polypeptide is LHFPL tetraspan subfamily member 3 protein (Mus musculus (Mouse)).